We begin with the raw amino-acid sequence, 362 residues long: Stress response regulator protein 1 (362 aa).

Disordered stretches follow at residues M1–Q39 and T163–T188. Over residues P19–Q39 the composition is skewed to low complexity. In terms of domain architecture, Response regulatory spans K209–E327. D260 bears the 4-aspartylphosphate mark.

In terms of biological role, required for stress adaptation, morphogenesis and virulence. The sequence is that of Stress response regulator protein 1 (SRR1) from Lodderomyces elongisporus (strain ATCC 11503 / CBS 2605 / JCM 1781 / NBRC 1676 / NRRL YB-4239) (Yeast).